The following is a 350-amino-acid chain: 3-dehydroquinate synthase (350 aa).

Residues 106–110 (GVIGD), 130–131 (TS), Lys143, and Lys152 each bind NAD(+). Residues Glu185, His246, and His263 each contribute to the Zn(2+) site.

This sequence belongs to the sugar phosphate cyclases superfamily. Dehydroquinate synthase family. Requires Co(2+) as cofactor. Zn(2+) serves as cofactor. It depends on NAD(+) as a cofactor.

It is found in the cytoplasm. It carries out the reaction 7-phospho-2-dehydro-3-deoxy-D-arabino-heptonate = 3-dehydroquinate + phosphate. Its pathway is metabolic intermediate biosynthesis; chorismate biosynthesis; chorismate from D-erythrose 4-phosphate and phosphoenolpyruvate: step 2/7. Functionally, catalyzes the conversion of 3-deoxy-D-arabino-heptulosonate 7-phosphate (DAHP) to dehydroquinate (DHQ). This is 3-dehydroquinate synthase from Clostridium beijerinckii (strain ATCC 51743 / NCIMB 8052) (Clostridium acetobutylicum).